We begin with the raw amino-acid sequence, 109 residues long: uncharacterized protein (109 aa).

This is an uncharacterized protein from Microplitis demolitor bracovirus (isolate Webb) (MdBV).